The chain runs to 156 residues: Ribosomal RNA large subunit methyltransferase H (156 aa).

Residues Leu-73, Gly-104, and 123 to 128 (LSALTL) contribute to the S-adenosyl-L-methionine site.

It belongs to the RNA methyltransferase RlmH family. Homodimer.

It is found in the cytoplasm. It carries out the reaction pseudouridine(1915) in 23S rRNA + S-adenosyl-L-methionine = N(3)-methylpseudouridine(1915) in 23S rRNA + S-adenosyl-L-homocysteine + H(+). Specifically methylates the pseudouridine at position 1915 (m3Psi1915) in 23S rRNA. The polypeptide is Ribosomal RNA large subunit methyltransferase H (Shewanella sediminis (strain HAW-EB3)).